The primary structure comprises 324 residues: CYFIP-related Rac1 interactor B (324 aa).

Glycine 2 carries N-myristoyl glycine lipidation. Lysine 74 is covalently cross-linked (Glycyl lysine isopeptide (Lys-Gly) (interchain with G-Cter in ubiquitin)).

The protein belongs to the CYRI family. As to quaternary structure, interacts with RAC1 (GTP-bound form preferentially). In terms of processing, ubiquitinated at Lys-74 upon Salmonella bacterial infection.

It localises to the membrane. Its subcellular location is the mitochondrion. Negatively regulates RAC1 signaling and RAC1-driven cytoskeletal remodeling. Regulates chemotaxis, cell migration and epithelial polarization by controlling the polarity, plasticity, duration and extent of protrusions. Limits Rac1 mediated activation of the Scar/WAVE complex, focuses protrusion signals and regulates pseudopod complexity by inhibiting Scar/WAVE-induced actin polymerization. Protects against Salmonella bacterial infection. Attenuates processes such as macropinocytosis, phagocytosis and cell migration and restrict sopE-mediated bacterial entry. Also restricts infection mediated by Mycobacterium tuberculosis and Listeria monocytogenes. Involved in the regulation of mitochondrial dynamics and oxidative stress. The chain is CYFIP-related Rac1 interactor B from Homo sapiens (Human).